The primary structure comprises 258 residues: UBX domain-containing protein 2A (258 aa).

Residues 1–14 (MKEVDNLDSIKEEW) are compositionally biased toward basic and acidic residues. The segment at 1-30 (MKEVDNLDSIKEEWACETGPPDSQPLNDNQ) is disordered. Residues 1–152 (MKEVDNLDSI…SATPRIVSKA (152 aa)) are required for interaction with CHRNA3. A required for inhibition of CHRNA3 ubiquitination and translocation of CHRNA3 to the plasma membrane resulting in an increase in acetylcholine-gated nicotinic acetylcholine receptor currents region spans residues 1–165 (MKEVDNLDSI…EVDNKSTLSA (165 aa)). One can recognise an SEP domain in the interval 61–125 (QVDVNIKLWK…VEDKKNEVCM (65 aa)). Residues 168 to 258 (LNNLEPITRI…QKTAEPFRKL (91 aa)) form a required for interaction with VCP region. A UBX domain is found at 170–247 (NLEPITRIQI…DLKNAVIIQR (78 aa)).

Part of a complex composed of STUB1/CHIP, VCP/p97, CHRNA3, and UBXN2A that modulates the ubiquitination and endoplasmic reticulum-associated degradation (ERAD) of CHRNA3. Within the complex UBXN2A acts as a scaffold protein required for the interaction of CHRNA3 with VCP/p97, this interaction also inhibits CHRNA3 ubiquitination by STUB1/CHIP and subsequently ERAD. Interacts (via SEP domain) with CHRNA3 and interacts (via UBX domain) with VCP/P97; these interactions are required for the interaction of CHRNA3 with the STUB1-VCP-UBXN2A complex. Interacts with HSPA9/MOT-2 (via SBD domain); the interaction inhibits HSPA9/MOT-2 interaction with and degradation of p53, thereby promotes p53 translocation to the nucleus. Interacts with RICTOR. Post-translationally, ubiquitinated. Expressed in the prefrontal cortex (at protein level). Expressed in the habenula and hippocampus (at protein level). Expressed in peripheral ganglia.

The protein localises to the golgi apparatus. It is found in the endoplasmic reticulum. The protein resides in the perikaryon. It localises to the cell projection. Its subcellular location is the dendrite. The protein localises to the nucleus. It is found in the cytoplasm. Acts to repress the ubiquitination and subsequent endoplasmic reticulum-associated degradation of CHRNA3 by the STUB1-VCP-UBXN2A complex in cortical neurons. Also acts to promote the translocation of CHRNA3 to the plasma membrane and subsequently increases plasma membrane acetylcholine-gated ion-channel activation. Plays a role in the inhibition of STUB1-mediated TP53 degradation, via its interaction with HSPA9 which acts to inhibit TP53 binding to HSPA9. Positively mediates the ubiquitination and proteosomal degradation of RICTOR, may thereby act as a negative regulator of the mTORC2 pathway. The sequence is that of UBX domain-containing protein 2A from Mus musculus (Mouse).